Here is a 501-residue protein sequence, read N- to C-terminus: Probable cytosol aminopeptidase (501 aa).

Mn(2+)-binding residues include Lys270 and Asp275. Lys282 is an active-site residue. Mn(2+)-binding residues include Asp293, Asp352, and Glu354. The active site involves Arg356.

This sequence belongs to the peptidase M17 family. Mn(2+) is required as a cofactor.

The protein resides in the cytoplasm. It carries out the reaction Release of an N-terminal amino acid, Xaa-|-Yaa-, in which Xaa is preferably Leu, but may be other amino acids including Pro although not Arg or Lys, and Yaa may be Pro. Amino acid amides and methyl esters are also readily hydrolyzed, but rates on arylamides are exceedingly low.. It catalyses the reaction Release of an N-terminal amino acid, preferentially leucine, but not glutamic or aspartic acids.. Presumably involved in the processing and regular turnover of intracellular proteins. Catalyzes the removal of unsubstituted N-terminal amino acids from various peptides. This is Probable cytosol aminopeptidase from Wigglesworthia glossinidia brevipalpis.